A 542-amino-acid chain; its full sequence is MSISVCYYLSKMSESTKVQFEKKSVGHNSDDEYDDTVPYNEDDETSEEEVQEYNEDEVIHPGFVLKGTYLLLKKIGSGNNASVWMTYHISNDKFLAMKIQDHLCYNDGCREVTIVNKISEYGKNNPDFFCVQLLDHFYFELSDNIKYVCSIYELYAGSIHFLLEEGKYKYGLPLPVVKTIIKQLLTSLSTLHGKLNIIHSDVKPENILFKGLPDYQKNIIKLFNRSGFREKYAELCSEYPNRHENLEIEDEFMDNLEYIAMDAIKEIRILEECLNTNEELIPDDPDNNEKYYDSTDSEEYDYSDNSDYYDDDEDTGPIKKYNERLQSVDDCQEILDCKEICDLDKEYNFATVLNNRESSSDKREIIDDKYVINCQTALTDFGNSYFFDKRTRNEIQDRRYRAPEVILDLNYTFCCDIWSVACVAYELATGYVLFDPFGEHFLNRDLHHLFLIEKIVGEIPLAMKKKSKRRKFLFDKSRGYHIKNVDEFKSTNLETILMNQYLFSKEEAESFANFLMCGLSIDPATRSNADELLKHPWLNDVN.

A compositionally biased stretch (basic and acidic residues) spans 20–30 (FEKKSVGHNSD). A disordered region spans residues 20–49 (FEKKSVGHNSDDEYDDTVPYNEDDETSEEE). A compositionally biased stretch (acidic residues) spans 31 to 49 (DEYDDTVPYNEDDETSEEE). The Protein kinase domain occupies 69–538 (YLLLKKIGSG…ADELLKHPWL (470 aa)). ATP contacts are provided by residues 75-83 (IGSGNNASV) and Lys-98. Residue Asp-201 is the Proton acceptor of the active site. Residues 278 to 314 (EELIPDDPDNNEKYYDSTDSEEYDYSDNSDYYDDDED) are disordered. Positions 295–314 (TDSEEYDYSDNSDYYDDDED) are enriched in acidic residues.

This sequence belongs to the protein kinase superfamily. Ser/Thr protein kinase family.

It carries out the reaction L-seryl-[protein] + ATP = O-phospho-L-seryl-[protein] + ADP + H(+). The catalysed reaction is L-threonyl-[protein] + ATP = O-phospho-L-threonyl-[protein] + ADP + H(+). The polypeptide is Putative serine/threonine-protein kinase L205 (Acanthamoeba polyphaga (Amoeba)).